Reading from the N-terminus, the 429-residue chain is Enolase (429 aa).

Gln168 is a (2R)-2-phosphoglycerate binding site. Glu210 acts as the Proton donor in catalysis. Residues Asp247, Glu288, and Asp315 each contribute to the Mg(2+) site. (2R)-2-phosphoglycerate-binding residues include Lys340, Arg369, Ser370, and Lys391. The Proton acceptor role is filled by Lys340.

It belongs to the enolase family. It depends on Mg(2+) as a cofactor.

The protein localises to the cytoplasm. It is found in the secreted. Its subcellular location is the cell surface. The catalysed reaction is (2R)-2-phosphoglycerate = phosphoenolpyruvate + H2O. The protein operates within carbohydrate degradation; glycolysis; pyruvate from D-glyceraldehyde 3-phosphate: step 4/5. In terms of biological role, catalyzes the reversible conversion of 2-phosphoglycerate (2-PG) into phosphoenolpyruvate (PEP). It is essential for the degradation of carbohydrates via glycolysis. In Nostoc punctiforme (strain ATCC 29133 / PCC 73102), this protein is Enolase.